Reading from the N-terminus, the 424-residue chain is ATP-sensitive inward rectifier potassium channel 8 (424 aa).

Residues M1–W69 lie on the Cytoplasmic side of the membrane. S6 is modified (phosphoserine). Residues R70 to V94 form a helical membrane-spanning segment. Topologically, residues A95–S126 are extracellular. Positions F127–Q138 form an intramembrane region, helical; Pore-forming. The segment at residues V139–G145 is an intramembrane region (pore-forming). The Selectivity filter motif lies at T140 to G145. At R146–L154 the chain is on the extracellular side. Residues A155 to C176 form a helical membrane-spanning segment. Topologically, residues I177–S424 are cytoplasmic. The tract at residues L374–S424 is disordered. The segment covering R387–S404 has biased composition (low complexity).

Belongs to the inward rectifier-type potassium channel (TC 1.A.2.1) family. KCNJ8 subfamily. As to quaternary structure, interacts with ABCC9. Widely expressed, including in pancreatic islets, pituitary, skeletal muscle and heart.

The protein resides in the membrane. The catalysed reaction is K(+)(in) = K(+)(out). Its function is as follows. Inward rectifier potassium channels are characterized by a greater tendency to allow potassium to flow into the cell rather than out of it. Their voltage dependence is regulated by the concentration of extracellular potassium; as external potassium is raised, the voltage range of the channel opening shifts to more positive voltages. The inward rectification is mainly due to the blockage of outward current by internal magnesium. This channel is activated by internal ATP and can be blocked by external barium. Can form a sulfonyllurea-sensitive but ATP-insensitive potassium channel with ABCC9. The chain is ATP-sensitive inward rectifier potassium channel 8 (Kcnj8) from Rattus norvegicus (Rat).